The following is a 228-amino-acid chain: Lipoprotein-releasing system ATP-binding protein LolD (228 aa).

Residues 8–228 (LQAKKLVKAY…ELHDGLLRRL (221 aa)) enclose the ABC transporter domain. 44–51 (GASGSGKS) lines the ATP pocket.

This sequence belongs to the ABC transporter superfamily. Lipoprotein translocase (TC 3.A.1.125) family. In terms of assembly, the complex is composed of two ATP-binding proteins (LolD) and two transmembrane proteins (LolC and LolE).

The protein resides in the cell inner membrane. In terms of biological role, part of the ABC transporter complex LolCDE involved in the translocation of mature outer membrane-directed lipoproteins, from the inner membrane to the periplasmic chaperone, LolA. Responsible for the formation of the LolA-lipoprotein complex in an ATP-dependent manner. The chain is Lipoprotein-releasing system ATP-binding protein LolD from Alcanivorax borkumensis (strain ATCC 700651 / DSM 11573 / NCIMB 13689 / SK2).